A 254-amino-acid chain; its full sequence is Protein GVQW3 (254 aa).

This is Protein GVQW3 from Homo sapiens (Human).